Reading from the N-terminus, the 393-residue chain is Beta-ureidopropionase (393 aa).

The CN hydrolase domain occupies Val-72–Leu-344. Glu-119 serves as the catalytic Proton acceptor. Residue Lys-196 is the Proton donor of the active site. The active-site Nucleophile is the Cys-233. A Phosphoserine modification is found at Ser-378.

Belongs to the carbon-nitrogen hydrolase superfamily. BUP family. In terms of assembly, homodimer, homotetramer, homooctamer; can also form higher homooligomers.

The protein resides in the cytoplasm. The catalysed reaction is 3-(carbamoylamino)propanoate + H2O + 2 H(+) = beta-alanine + NH4(+) + CO2. It catalyses the reaction 3-(carbamoylamino)-2-methylpropanoate + H2O + 2 H(+) = (R)-3-amino-2-methylpropanoate + NH4(+) + CO2. Its pathway is amino-acid biosynthesis; beta-alanine biosynthesis. Its function is as follows. Catalyzes a late step in pyrimidine degradation. Converts N-carbamoyl-beta-alanine (3-ureidopropanoate) into beta-alanine, ammonia and carbon dioxide. Likewise, converts N-carbamoyl-beta-aminoisobutyrate (3-ureidoisobutyrate) into beta-aminoisobutyrate, ammonia and carbon dioxide. The polypeptide is Beta-ureidopropionase (Upb1) (Mus musculus (Mouse)).